Consider the following 460-residue polypeptide: Benzyl alcohol O-benzoyltransferase (460 aa).

Residues histidine 167 and aspartate 382 each act as proton acceptor in the active site.

Belongs to the plant acyltransferase family. Specifically expressed in flowers, mainly in the limb of flowers corollas, and, at low levels, in roots, stems, sepals and leaves.

It catalyses the reaction benzyl alcohol + benzoyl-CoA = benzyl benzoate + CoA. The enzyme catalyses benzyl alcohol + acetyl-CoA = benzyl acetate + CoA. The catalysed reaction is 3-hydroxybenzyl alcohol + acetyl-CoA = 3-hydroxy-benzyl acetate + CoA. It carries out the reaction 3-hydroxybenzyl alcohol + benzoyl-CoA = 3-hydroxy-benzyl benzoate + CoA. It catalyses the reaction 2-phenylethanol + benzoyl-CoA = phenethyl benzoate + CoA. The enzyme catalyses (3Z)-hex-3-en-1-ol + benzoyl-CoA = (3Z)-hex-3-en-1-yl benzoate + CoA. The catalysed reaction is (2E)-geraniol + acetyl-CoA = (2E)-geranyl acetate + CoA. It carries out the reaction butan-1-ol + benzoyl-CoA = butyl benzoate + CoA. It catalyses the reaction (2E)-geraniol + benzoyl-CoA = (2E)-geranyl benzoate + CoA. The enzyme catalyses octan-1-ol + benzoyl-CoA = octyl benzoate + CoA. Its pathway is aromatic compound metabolism; benzoyl-CoA degradation. Involved in the production of volatile organic compounds (VOCs), including floral volatile benzenoids and phenylpropanoids (FVBP), in flowers of fragrant cultivars (e.g. cv. Mitchell and cv. V26), scent attracting pollinators (e.g. the night-active hawkmoth pollinator Manduca sexta). Acyltransferase that catalyzes the transfer of benzoyl and acetyl moieties to a large variety of potential substrate alcohols, and involved in the formation of volatile esters benzyl benzoate and phenylethyl benzoate from benzoyl-CoA. With acetyl-CoA, mainly active on benzyl alcohol, and, to a lower extent, on 3-hydroxybenzyl alcohol, geraniol, and 2-phenylethanol, but barely active on butanol, 1-octanol, 4-hydroxy-benzyl alcohol, 2-hexanol, cis-3-hexen-1-ol and linalool. With benzoyl-CoA, mainly active on benzyl alcohol, but also efficient on several substrates, including 3-hydroxybenzyl alcohol, 2-phenylethanol, geraniol, butanol, cis-3-hexen-1-ol and 1-octanol. This is Benzyl alcohol O-benzoyltransferase from Petunia hybrida (Petunia).